The chain runs to 285 residues: Probable endonuclease 4 (285 aa).

Zn(2+)-binding residues include H69, H109, E145, D179, H182, H216, D229, H231, and E261.

This sequence belongs to the AP endonuclease 2 family. Zn(2+) is required as a cofactor.

It carries out the reaction Endonucleolytic cleavage to 5'-phosphooligonucleotide end-products.. Endonuclease IV plays a role in DNA repair. It cleaves phosphodiester bonds at apurinic or apyrimidinic (AP) sites, generating a 3'-hydroxyl group and a 5'-terminal sugar phosphate. The polypeptide is Probable endonuclease 4 (Salmonella schwarzengrund (strain CVM19633)).